Here is a 461-residue protein sequence, read N- to C-terminus: Cysteine--tRNA ligase (461 aa).

Residue Cys-28 coordinates Zn(2+). A 'HIGH' region motif is present at residues 30–40; the sequence is ITVYDLCHIGH. Cys-209, His-234, and Glu-238 together coordinate Zn(2+). The 'KMSKS' region motif lies at 266-270; that stretch reads KMSKS. Position 269 (Lys-269) interacts with ATP.

The protein belongs to the class-I aminoacyl-tRNA synthetase family. In terms of assembly, monomer. Requires Zn(2+) as cofactor.

Its subcellular location is the cytoplasm. The enzyme catalyses tRNA(Cys) + L-cysteine + ATP = L-cysteinyl-tRNA(Cys) + AMP + diphosphate. The sequence is that of Cysteine--tRNA ligase from Enterobacter sp. (strain 638).